A 207-amino-acid polypeptide reads, in one-letter code: Ras-related protein Rab-5B (207 aa).

The N-myristoyl glycine moiety is linked to residue Gly2. GTP-binding positions include 41 to 49 (GDSGVGKSS), 60 to 66 (SEKHQVT), 90 to 94 (DTGGQ), 148 to 151 (NKKD), and 176 to 178 (SAK). Residues 63-71 (HQVTIGAAF) carry the Effector region motif.

The protein belongs to the small GTPase superfamily. Rab family. As to quaternary structure, interacts with CK1. May interact with ARF1. In terms of processing, myristoylation is required for cell membrane and food vacuole membrane localization. Post-translationally, may be palmitoylated on Cys-3. Lacks the C-terminal cysteine motifs subject to isoprenylation present in mammalian RAB5B homolog.

The protein resides in the cell membrane. It localises to the vacuole membrane. Its subcellular location is the vesicle. The catalysed reaction is GTP + H2O = GDP + phosphate + H(+). Alternates between an inactive GDP-bound form and an active GTP-bound form. Activated by guanine nucleotide-exchange factors (GEFs) and inactivated by GTPase-activating proteins (GAPs). In terms of biological role, small GTPase which regulates vesicle trafficking between organelles. May be involved in the trafficking of the N-myristoylated AK2 from the endoplasmic reticulum to the parasitophorous vacuole membrane. In Plasmodium falciparum (isolate 3D7), this protein is Ras-related protein Rab-5B.